The primary structure comprises 216 residues: Ribosomal RNA large subunit methyltransferase E (216 aa).

Positions 67, 69, 87, 103, and 128 each coordinate S-adenosyl-L-methionine. Lys168 functions as the Proton acceptor in the catalytic mechanism.

The protein belongs to the class I-like SAM-binding methyltransferase superfamily. RNA methyltransferase RlmE family.

It localises to the cytoplasm. The catalysed reaction is uridine(2552) in 23S rRNA + S-adenosyl-L-methionine = 2'-O-methyluridine(2552) in 23S rRNA + S-adenosyl-L-homocysteine + H(+). Functionally, specifically methylates the uridine in position 2552 of 23S rRNA at the 2'-O position of the ribose in the fully assembled 50S ribosomal subunit. This Acinetobacter baylyi (strain ATCC 33305 / BD413 / ADP1) protein is Ribosomal RNA large subunit methyltransferase E.